Here is a 212-residue protein sequence, read N- to C-terminus: 2,3-bisphosphoglycerate-dependent phosphoglycerate mutase (212 aa).

Residues 9-16, 22-23, arginine 61, 88-91, lysine 99, 115-116, and 159-160 contribute to the substrate site; these read RHGQSEWN, TG, ERDY, RR, and GN. Histidine 10 (tele-phosphohistidine intermediate) is an active-site residue. Glutamate 88 serves as the catalytic Proton donor/acceptor.

This sequence belongs to the phosphoglycerate mutase family. BPG-dependent PGAM subfamily. Homodimer.

The catalysed reaction is (2R)-2-phosphoglycerate = (2R)-3-phosphoglycerate. The protein operates within carbohydrate degradation; glycolysis; pyruvate from D-glyceraldehyde 3-phosphate: step 3/5. Functionally, catalyzes the interconversion of 2-phosphoglycerate and 3-phosphoglycerate. This is 2,3-bisphosphoglycerate-dependent phosphoglycerate mutase from Methylorubrum extorquens (strain CM4 / NCIMB 13688) (Methylobacterium extorquens).